The sequence spans 163 residues: Protein-export protein SecB (163 aa).

The protein belongs to the SecB family. Homotetramer, a dimer of dimers. One homotetramer interacts with 1 SecA dimer.

The protein resides in the cytoplasm. In terms of biological role, one of the proteins required for the normal export of preproteins out of the cell cytoplasm. It is a molecular chaperone that binds to a subset of precursor proteins, maintaining them in a translocation-competent state. It also specifically binds to its receptor SecA. The protein is Protein-export protein SecB of Pseudomonas aeruginosa (strain LESB58).